The primary structure comprises 907 residues: Nuclear receptor coactivator 7 (907 aa).

Basic and acidic residues predominate over residues methionine 1–glutamine 12. A coiled-coil region spans residues methionine 1 to glutamate 29. 3 disordered regions span residues methionine 1–serine 51, aspartate 63–lysine 83, and tyrosine 99–proline 121. Residues lysine 25–serine 41 show a composition bias toward polar residues. Composition is skewed to basic and acidic residues over residues alanine 68 to glutamate 78 and tyrosine 99 to methionine 116. The LysM domain occupies isoleucine 125 to valine 168. Disordered stretches follow at residues leucine 335 to glutamate 373 and aspartate 401 to glycine 443. Basic and acidic residues predominate over residues aspartate 401–serine 422. Residues alanine 746–glutamate 907 enclose the TLDc domain.

This sequence belongs to the OXR1 family.

The protein resides in the nucleus. In terms of biological role, enhances the transcriptional activities of several nuclear receptors. The polypeptide is Nuclear receptor coactivator 7 (NCOA7) (Gallus gallus (Chicken)).